Reading from the N-terminus, the 97-residue chain is MLIKQFSRRPKNMKVQILLAFAALFVLAVGSYASESKKLDLRDASFSAMFSADYQLNPQERGCRYFLGECKKTSECCEHLACHDKHKWCAWDWTIGK.

Positions 1 to 33 (MLIKQFSRRPKNMKVQILLAFAALFVLAVGSYA) are cleaved as a signal peptide. Residues 34 to 61 (SESKKLDLRDASFSAMFSADYQLNPQER) constitute a propeptide that is removed on maturation. Cystine bridges form between Cys63/Cys77, Cys70/Cys82, and Cys76/Cys89.

This sequence belongs to the neurotoxin 10 (Hwtx-1) family. 12 (Hntx-12) subfamily. In terms of tissue distribution, expressed by the venom gland.

It is found in the secreted. Functionally, ion channel inhibitor. This is U6-theraphotoxin-Hhn1a 2 from Cyriopagopus hainanus (Chinese bird spider).